The sequence spans 253 residues: Triosephosphate isomerase (253 aa).

9–11 (NWK) lines the substrate pocket. The Electrophile role is filled by His98. Glu170 functions as the Proton acceptor in the catalytic mechanism. Substrate is bound by residues Gly176, Ser216, and 237-238 (GG).

This sequence belongs to the triosephosphate isomerase family. Homodimer.

Its subcellular location is the cytoplasm. It catalyses the reaction D-glyceraldehyde 3-phosphate = dihydroxyacetone phosphate. It participates in carbohydrate biosynthesis; gluconeogenesis. The protein operates within carbohydrate degradation; glycolysis; D-glyceraldehyde 3-phosphate from glycerone phosphate: step 1/1. Functionally, involved in the gluconeogenesis. Catalyzes stereospecifically the conversion of dihydroxyacetone phosphate (DHAP) to D-glyceraldehyde-3-phosphate (G3P). In Amoebophilus asiaticus (strain 5a2), this protein is Triosephosphate isomerase.